The chain runs to 326 residues: Probable GTP 3',8-cyclase (326 aa).

The region spanning 6–235 is the Radical SAM core domain; it reads LYGRPVLSLR…NRPRYIIRTQ (230 aa). Arg15 serves as a coordination point for GTP. [4Fe-4S] cluster-binding residues include Cys22, Cys26, and Cys29. Lys62 provides a ligand contact to GTP. An S-adenosyl-L-methionine-binding site is contributed by Gly66. A GTP-binding site is contributed by Thr92. Residue Ser116 participates in S-adenosyl-L-methionine binding. Lys153 contributes to the GTP binding site. Residues Cys253 and Cys256 each contribute to the [4Fe-4S] cluster site. Residue 258 to 260 participates in GTP binding; it reads RLR. Cys270 is a binding site for [4Fe-4S] cluster.

This sequence belongs to the radical SAM superfamily. MoaA family. The cofactor is [4Fe-4S] cluster.

It carries out the reaction GTP + AH2 + S-adenosyl-L-methionine = (8S)-3',8-cyclo-7,8-dihydroguanosine 5'-triphosphate + 5'-deoxyadenosine + L-methionine + A + H(+). The protein operates within cofactor biosynthesis; molybdopterin biosynthesis. In terms of biological role, catalyzes the cyclization of GTP to (8S)-3',8-cyclo-7,8-dihydroguanosine 5'-triphosphate. This is Probable GTP 3',8-cyclase from Thermoplasma volcanium (strain ATCC 51530 / DSM 4299 / JCM 9571 / NBRC 15438 / GSS1).